Here is a 287-residue protein sequence, read N- to C-terminus: MSTYVSSVFSLATMKQNPLKRKRNDEITEEKVVLLMAMHKEDDEHQHTKPSPPSWEILCLVGPYMDPESLAVASCVSTTWSKCFSSEDLWKSLPATRHSIFAKAITKEGAKPAWLSYKRLISEAESAAKRRRNNQPAEPKISLSDLVFIVHVSAGSKEAVVVKQGKDLVFGSNERFQIEADVRDSGFTADMKDVSMSWNVVLRNYERMFLMSETVIKSLDSMIGWFTDELPGTKNRYCDGSNLVGEVKPSFNEDVLDKVVFAIADSRNWKSLFVDDVLRYLQCFLVD.

The region spanning 50 to 101 (PSPPSWEILCLVGPYMDPESLAVASCVSTTWSKCFSSEDLWKSLPATRHSIF) is the F-box; degenerate domain.

The chain is Probable F-box protein At5g04010 (NSFBx) from Arabidopsis thaliana (Mouse-ear cress).